We begin with the raw amino-acid sequence, 695 residues long: Putative pentatricopeptide repeat-containing protein At1g77010, mitochondrial (695 aa).

The transit peptide at 1 to 64 (MILKYNSSYR…KGFLSSIVIV (64 aa)) directs the protein to the mitochondrion. PPR repeat units follow at residues 61 to 91 (IVIVANHLLQMYSRSGKMGIARNLFDEMPDR), 92 to 122 (NYFSWNTMIEGYMNSGEKGTSLRFFDMMPER), 123 to 157 (DGYSWNVVVSGFAKAGELSVARRLFNAMPEKDVVT), 159 to 184 (NSLLHGYILNGYAEEALRLFKELNFS), 186 to 220 (DAITLTTVLKACAELEALKCGKQIHAQILIGGVEC), 221 to 251 (DSKMNSSLVNVYAKCGDLRMASYMLEQIREP), 252 to 282 (DDHSLSALISGYANCGRVNESRGLFDRKSNR), 283 to 313 (CVILWNSMISGYIANNMKMEALVLFNEMRNE), 317 to 351 (DSRTLAAVINACIGLGFLETGKQMHCHACKFGLID), 352 to 382 (DIVVASTLLDMYSKCGSPMEACKLFSEVESY), 383 to 417 (DTILLNSMIKVYFSCGRIDDAKRVFERIENKSLIS), 418 to 448 (WNSMTNGFSQNGCTVETLEYFHQMHKLDLPT), 449 to 483 (DEVSLSSVISACASISSLELGEQVFARATIVGLDS), 484 to 514 (DQVVSSSLIDLYCKCGFVEHGRRVFDTMVKS), 515 to 549 (DEVPWNSMISGYATNGQGFEAIDLFKKMSVAGIRP), 550 to 585 (TQITFMVVLTACNYCGLVEEGRKLFESMKVDHGFVP), and 586 to 616 (DKEHFSCMVDLLARAGYVEEAINLVEEMPFD). Positions 621–695 (MWSSILRGCV…KNPGSSWTDC (75 aa)) are type E motif; degenerate.

This sequence belongs to the PPR family. PCMP-E subfamily.

The protein resides in the mitochondrion. The protein is Putative pentatricopeptide repeat-containing protein At1g77010, mitochondrial (PCMP-E5) of Arabidopsis thaliana (Mouse-ear cress).